The chain runs to 389 residues: Pyruvylated Gal-beta-1,3-epitope synthesis protein 2 (389 aa).

Residues 1–16 (MTKLWVNFFSQKLLRL) are Cytoplasmic-facing. A helical transmembrane segment spans residues 17–37 (LIPSIIVVFAFAALFAIYSPI). Residues 38 to 389 (QLGGINFYKR…WSNSFDLITA (352 aa)) lie on the Lumenal side of the membrane.

It localises to the endoplasmic reticulum membrane. The protein localises to the golgi apparatus membrane. Its function is as follows. Involved in cell wall biogenesis. Has a role in the addition of Gal-beta1,3 moeities to galactomannans and their subsequent pyruvylation. Has a role in meiosis. This chain is Pyruvylated Gal-beta-1,3-epitope synthesis protein 2 (pvg2), found in Schizosaccharomyces pombe (strain 972 / ATCC 24843) (Fission yeast).